A 237-amino-acid polypeptide reads, in one-letter code: Ribonuclease PH (237 aa).

Residues arginine 86 and 124–126 (GTR) each bind phosphate.

The protein belongs to the RNase PH family. In terms of assembly, homohexameric ring arranged as a trimer of dimers.

It carries out the reaction tRNA(n+1) + phosphate = tRNA(n) + a ribonucleoside 5'-diphosphate. Its function is as follows. Phosphorolytic 3'-5' exoribonuclease that plays an important role in tRNA 3'-end maturation. Removes nucleotide residues following the 3'-CCA terminus of tRNAs; can also add nucleotides to the ends of RNA molecules by using nucleoside diphosphates as substrates, but this may not be physiologically important. Probably plays a role in initiation of 16S rRNA degradation (leading to ribosome degradation) during starvation. This chain is Ribonuclease PH, found in Shewanella oneidensis (strain ATCC 700550 / JCM 31522 / CIP 106686 / LMG 19005 / NCIMB 14063 / MR-1).